A 361-amino-acid chain; its full sequence is Chorismate synthase (361 aa).

Residues R48 and R54 each contribute to the NADP(+) site. FMN-binding positions include 125 to 127, 238 to 239, G278, 293 to 297, and R319; these read RSS, NA, and KPTSS.

Belongs to the chorismate synthase family. Homotetramer. FMNH2 serves as cofactor.

It catalyses the reaction 5-O-(1-carboxyvinyl)-3-phosphoshikimate = chorismate + phosphate. The protein operates within metabolic intermediate biosynthesis; chorismate biosynthesis; chorismate from D-erythrose 4-phosphate and phosphoenolpyruvate: step 7/7. Functionally, catalyzes the anti-1,4-elimination of the C-3 phosphate and the C-6 proR hydrogen from 5-enolpyruvylshikimate-3-phosphate (EPSP) to yield chorismate, which is the branch point compound that serves as the starting substrate for the three terminal pathways of aromatic amino acid biosynthesis. This reaction introduces a second double bond into the aromatic ring system. The chain is Chorismate synthase from Vibrio campbellii (strain ATCC BAA-1116).